The primary structure comprises 384 residues: Deoxyguanosinetriphosphate triphosphohydrolase-like protein (384 aa).

In terms of domain architecture, HD spans 62-198; the sequence is RLTHSLEVST…AALADDISYI (137 aa).

It belongs to the dGTPase family. Type 2 subfamily.

The protein is Deoxyguanosinetriphosphate triphosphohydrolase-like protein of Rickettsia peacockii (strain Rustic).